The primary structure comprises 97 residues: uncharacterized protein (97 aa).

The signal sequence occupies residues 1–21 (MLLHGLGRMNIIFICFPSLAC).

This is an uncharacterized protein from Schizosaccharomyces pombe (strain 972 / ATCC 24843) (Fission yeast).